The following is a 495-amino-acid chain: Steroid 21-hydroxylase (495 aa).

The heme b site is built by Arg-92 and Lys-121. A 17alpha-hydroxyprogesterone-binding site is contributed by Arg-234. Position 234 (Arg-234) interacts with progesterone. Heme b-binding residues include His-366, Arg-427, and Cys-429.

Belongs to the cytochrome P450 family. Heme b is required as a cofactor.

It is found in the endoplasmic reticulum membrane. It localises to the microsome membrane. It catalyses the reaction progesterone + reduced [NADPH--hemoprotein reductase] + O2 = 21-hydroxyprogesterone + oxidized [NADPH--hemoprotein reductase] + H2O + H(+). The enzyme catalyses 17alpha-hydroxyprogesterone + reduced [NADPH--hemoprotein reductase] + O2 = 11-deoxycortisol + oxidized [NADPH--hemoprotein reductase] + H2O + H(+). Its function is as follows. A cytochrome P450 monooxygenase that plays a major role in adrenal steroidogenesis. Catalyzes the hydroxylation at C-21 of progesterone and 17alpha-hydroxyprogesterone to respectively form 11-deoxycorticosterone and 11-deoxycortisol, intermediate metabolites in the biosynthetic pathway of mineralocorticoids and glucocorticoids. Mechanistically, uses molecular oxygen inserting one oxygen atom into a substrate, and reducing the second into a water molecule, with two electrons provided by NADPH via cytochrome P450 reductase (CPR; NADPH-ferrihemoprotein reductase). This is Steroid 21-hydroxylase (CYP21A2) from Homo sapiens (Human).